A 500-amino-acid polypeptide reads, in one-letter code: Maturase K (500 aa).

It belongs to the intron maturase 2 family. MatK subfamily.

The protein resides in the plastid. It is found in the chloroplast. Usually encoded in the trnK tRNA gene intron. Probably assists in splicing its own and other chloroplast group II introns. The sequence is that of Maturase K from Argentina anserina (Silverweed cinquefoil).